The sequence spans 187 residues: Transmembrane protein 272 (187 aa).

Transmembrane regions (helical) follow at residues 21 to 41 (CFVVVLCAFLALPLSMTFIGM), 52 to 72 (LIPLYLLVGGIVGTLKVSLLL), 107 to 127 (IHLLLSLFLFLWFILGNYWVF), and 149 to 169 (LYLFAVGVLALSHTVLVLLLL).

Its subcellular location is the membrane. The polypeptide is Transmembrane protein 272 (Homo sapiens (Human)).